A 320-amino-acid chain; its full sequence is Nucleotide-binding protein Pcryo_0127 (320 aa).

32-39 contacts ATP; it reads GRSGSGKT. 82–85 contacts GTP; sequence DIRT.

The protein belongs to the RapZ-like family.

In terms of biological role, displays ATPase and GTPase activities. This chain is Nucleotide-binding protein Pcryo_0127, found in Psychrobacter cryohalolentis (strain ATCC BAA-1226 / DSM 17306 / VKM B-2378 / K5).